The sequence spans 640 residues: Chaperone protein DnaK (640 aa).

At T199 the chain carries Phosphothreonine; by autocatalysis. Residues 603–640 are disordered; it reads YAAGETESSAAEPGEPQEKTVDAEVVDAEFEEVKDDKK. Residues 626–640 show a composition bias toward acidic residues; that stretch reads EVVDAEFEEVKDDKK.

Belongs to the heat shock protein 70 family.

Acts as a chaperone. This is Chaperone protein DnaK from Methylobacillus flagellatus (strain ATCC 51484 / DSM 6875 / VKM B-1610 / KT).